A 394-amino-acid polypeptide reads, in one-letter code: Glutamyl-tRNA reductase (394 aa).

Residues 45–48 (TCNR), S99, 104–106 (EEQ), and Q110 contribute to the substrate site. C46 acts as the Nucleophile in catalysis. 175-180 (GLGNIG) lines the NADP(+) pocket.

Belongs to the glutamyl-tRNA reductase family. As to quaternary structure, homodimer.

It carries out the reaction (S)-4-amino-5-oxopentanoate + tRNA(Glu) + NADP(+) = L-glutamyl-tRNA(Glu) + NADPH + H(+). Its pathway is porphyrin-containing compound metabolism; protoporphyrin-IX biosynthesis; 5-aminolevulinate from L-glutamyl-tRNA(Glu): step 1/2. Functionally, catalyzes the NADPH-dependent reduction of glutamyl-tRNA(Glu) to glutamate 1-semialdehyde (GSA). This is Glutamyl-tRNA reductase from Caldicellulosiruptor saccharolyticus (strain ATCC 43494 / DSM 8903 / Tp8T 6331).